Here is a 233-residue protein sequence, read N- to C-terminus: Orotidine 5'-phosphate decarboxylase (233 aa).

Substrate contacts are provided by residues aspartate 10, lysine 32, 60 to 69 (DLKLHDIPAT), threonine 115, arginine 176, glutamine 185, glycine 205, and arginine 206. Catalysis depends on lysine 62, which acts as the Proton donor.

This sequence belongs to the OMP decarboxylase family. Type 1 subfamily. In terms of assembly, homodimer.

The enzyme catalyses orotidine 5'-phosphate + H(+) = UMP + CO2. Its pathway is pyrimidine metabolism; UMP biosynthesis via de novo pathway; UMP from orotate: step 2/2. Functionally, catalyzes the decarboxylation of orotidine 5'-monophosphate (OMP) to uridine 5'-monophosphate (UMP). This is Orotidine 5'-phosphate decarboxylase from Thermobifida fusca (strain YX).